A 69-amino-acid polypeptide reads, in one-letter code: FXYD domain-containing ion transport regulator 11 (69 aa).

The signal sequence occupies residues 1 to 22; it reads MSQLTELVLLTVFLALFSRAEA. The Extracellular segment spans residues 23–33; sequence NPFVYNYEALR. The helical transmembrane segment at 34-54 threads the bilayer; that stretch reads IGGLVFTCVLVAGAVTALCWG. At 55–69 the chain is on the cytoplasmic side; sequence QCKPKRKHDDDASKI.

This sequence belongs to the FXYD family. Detected in adult gill and in larval skin at 2 days post-fertilization (at protein level). In adult gill, strong expression is found in the basal regions of the secondary lamellae.

The protein localises to the cell membrane. In terms of biological role, may modulate the activity of a sodium/potassium-transporting ATPase. The protein is FXYD domain-containing ion transport regulator 11 of Danio rerio (Zebrafish).